A 245-amino-acid chain; its full sequence is Pyridoxine 5'-phosphate synthase (245 aa).

N7 is a binding site for 3-amino-2-oxopropyl phosphate. 9–10 lines the 1-deoxy-D-xylulose 5-phosphate pocket; the sequence is DH. R18 contributes to the 3-amino-2-oxopropyl phosphate binding site. Residue H43 is the Proton acceptor of the active site. 1-deoxy-D-xylulose 5-phosphate is bound by residues R45 and H50. E70 functions as the Proton acceptor in the catalytic mechanism. T100 lines the 1-deoxy-D-xylulose 5-phosphate pocket. H190 acts as the Proton donor in catalysis. Residues G191 and 212 to 213 contribute to the 3-amino-2-oxopropyl phosphate site; that span reads GH.

Belongs to the PNP synthase family. As to quaternary structure, homooctamer; tetramer of dimers.

The protein localises to the cytoplasm. It catalyses the reaction 3-amino-2-oxopropyl phosphate + 1-deoxy-D-xylulose 5-phosphate = pyridoxine 5'-phosphate + phosphate + 2 H2O + H(+). It participates in cofactor biosynthesis; pyridoxine 5'-phosphate biosynthesis; pyridoxine 5'-phosphate from D-erythrose 4-phosphate: step 5/5. Its function is as follows. Catalyzes the complicated ring closure reaction between the two acyclic compounds 1-deoxy-D-xylulose-5-phosphate (DXP) and 3-amino-2-oxopropyl phosphate (1-amino-acetone-3-phosphate or AAP) to form pyridoxine 5'-phosphate (PNP) and inorganic phosphate. This chain is Pyridoxine 5'-phosphate synthase, found in Prochlorococcus marinus (strain MIT 9303).